The chain runs to 39 residues: Cytochrome b559 subunit beta (39 aa).

The helical transmembrane segment at 14-30 (WLAIHGLAVPTVFFLGS) threads the bilayer. Heme is bound at residue His18.

The protein belongs to the PsbE/PsbF family. In terms of assembly, heterodimer of an alpha subunit and a beta subunit. PSII is composed of 1 copy each of membrane proteins PsbA, PsbB, PsbC, PsbD, PsbE, PsbF, PsbH, PsbI, PsbJ, PsbK, PsbL, PsbM, PsbT, PsbX, PsbY, PsbZ, Psb30/Ycf12, at least 3 peripheral proteins of the oxygen-evolving complex and a large number of cofactors. It forms dimeric complexes. It depends on heme b as a cofactor.

It is found in the plastid. The protein localises to the chloroplast thylakoid membrane. Its function is as follows. This b-type cytochrome is tightly associated with the reaction center of photosystem II (PSII). PSII is a light-driven water:plastoquinone oxidoreductase that uses light energy to abstract electrons from H(2)O, generating O(2) and a proton gradient subsequently used for ATP formation. It consists of a core antenna complex that captures photons, and an electron transfer chain that converts photonic excitation into a charge separation. The sequence is that of Cytochrome b559 subunit beta from Psilotum nudum (Whisk fern).